The sequence spans 262 residues: Phenylalanine-4-hydroxylase (262 aa).

H121, H126, and E166 together coordinate Fe cation.

This sequence belongs to the biopterin-dependent aromatic amino acid hydroxylase family. As to quaternary structure, monomer. The cofactor is Fe(2+).

It carries out the reaction (6R)-L-erythro-5,6,7,8-tetrahydrobiopterin + L-phenylalanine + O2 = (4aS,6R)-4a-hydroxy-L-erythro-5,6,7,8-tetrahydrobiopterin + L-tyrosine. It functions in the pathway amino-acid degradation; L-phenylalanine degradation; acetoacetate and fumarate from L-phenylalanine: step 1/6. In Pseudomonas aeruginosa (strain ATCC 15692 / DSM 22644 / CIP 104116 / JCM 14847 / LMG 12228 / 1C / PRS 101 / PAO1), this protein is Phenylalanine-4-hydroxylase (phhA).